The sequence spans 188 residues: Probable manganese efflux pump MntP (188 aa).

Transmembrane regions (helical) follow at residues 3-23, 41-61, 66-86, 106-128, 143-163, and 168-188; these read YTAT…ASIG, LIFG…GILA, LEWN…RMII, WLLV…GLAF, ATLI…PMLG, and ILGG…HFHG.

Belongs to the MntP (TC 9.B.29) family.

It is found in the cell inner membrane. In terms of biological role, probably functions as a manganese efflux pump. This chain is Probable manganese efflux pump MntP, found in Salmonella heidelberg (strain SL476).